The primary structure comprises 136 residues: Large ribosomal subunit protein uL16 (136 aa).

This sequence belongs to the universal ribosomal protein uL16 family. Part of the 50S ribosomal subunit.

Binds 23S rRNA and is also seen to make contacts with the A and possibly P site tRNAs. This Pasteurella multocida (strain Pm70) protein is Large ribosomal subunit protein uL16.